A 293-amino-acid chain; its full sequence is MALVSADSRIAELLAELQRLLGHTQEERSRSEHNLINIQKTHERMQTENKISPYYRTKLRGLYTTAKADAEAECNILRKALDKIAEIKSLLEERRIAAKIAGIYSDAEPPRKTMRRGVLMTLLQQSAMTLPLWIGKPGDKPPPLCGAMPAAGDYVAKPGDKVAARVKAVDGDEQWILAEVVSYSHAANKYEVDDIDEEGKERHTLSRRRVIPLPQWKANPETDPEALFQREQLVLALYPQTTCFYRALIHAPPQRPQDDYSVLFEDTSYADGYSPPLNVAQRYVVACKETKKK.

Positions 12–88 form a coiled coil; the sequence is ELLAELQRLL…KALDKIAEIK (77 aa). Residues 152–293 form the SGF29 C-terminal domain; that stretch reads GDYVAKPGDK…VVACKETKKK (142 aa). Histone H3K4me3 N-terminus binding regions lie at residues 194–196 and 240–243; these read DID and QTTC. Residues 264–266 form a histone H3K4me3 binding region; that stretch reads FED.

This sequence belongs to the SGF29 family. As to quaternary structure, interacts with dimethylated and trimethylated 'Lys-4' of histone H3 (H3K4me2 and H3K4me3), with a preference for the trimethylated form (H3K4me3). Component of some SAGA-type complexes. Component of the ADA2A-containing complex (ATAC).

It is found in the nucleus. Functionally, chromatin reader component of some histone acetyltransferase (HAT) SAGA-type complexes like the TFTC-HAT, ATAC or STAGA complexes. SGF29 specifically recognizes and binds methylated 'Lys-4' of histone H3 (H3K4me), with a preference for trimethylated form (H3K4me3). In the SAGA-type complexes, SGF29 is required to recruit complexes to H3K4me. Also binds non-histone proteins that are methylated on Lys residues. The polypeptide is SAGA-associated factor 29 (Gallus gallus (Chicken)).